Consider the following 620-residue polypeptide: Acetylcholinesterase 1 (620 aa).

Residues 1 to 31 (MRNSLLFFIFLPSTILAVDLIHLHDGSPLFG) form the signal peptide. The N-linked (GlcNAc...) asparagine glycan is linked to Asn-74. A disulfide bond links Cys-82 and Cys-109. Ser-216 acts as the Acyl-ester intermediate in catalysis. Residues Cys-270 and Cys-286 are joined by a disulfide bond. N-linked (GlcNAc...) asparagine glycosylation is present at Asn-272. Residues Glu-346 and His-468 each act as charge relay system in the active site. Cys-430 and Cys-558 form a disulfide bridge. Asn-486 and Asn-536 each carry an N-linked (GlcNAc...) asparagine glycan.

This sequence belongs to the type-B carboxylesterase/lipase family. As to quaternary structure, oligomer composed of disulfide-linked homodimers.

The protein localises to the synapse. Its subcellular location is the secreted. It localises to the cell membrane. The catalysed reaction is acetylcholine + H2O = choline + acetate + H(+). Rapidly hydrolyzes acetylcholine and releases choline into the synapse. It can hydrolyze propionylcholine and butyrylthiocholine in vitro. In Caenorhabditis elegans, this protein is Acetylcholinesterase 1 (ace-1).